A 109-amino-acid chain; its full sequence is Mitochondrial pyruvate carrier 2 (109 aa).

3 helical membrane passes run 19 to 35 (IHFW…IANI), 51 to 67 (IAVT…STII), and 74 to 90 (LFSV…YQLT).

The protein belongs to the mitochondrial pyruvate carrier (MPC) (TC 2.A.105) family.

Its subcellular location is the mitochondrion inner membrane. Functionally, mediates the uptake of pyruvate into mitochondria. The protein is Mitochondrial pyruvate carrier 2 of Arabidopsis thaliana (Mouse-ear cress).